The primary structure comprises 225 residues: Uracil-DNA glycosylase (225 aa).

The active-site Proton acceptor is the D65.

This sequence belongs to the uracil-DNA glycosylase (UDG) superfamily. UNG family.

The protein localises to the cytoplasm. It carries out the reaction Hydrolyzes single-stranded DNA or mismatched double-stranded DNA and polynucleotides, releasing free uracil.. In terms of biological role, excises uracil residues from the DNA which can arise as a result of misincorporation of dUMP residues by DNA polymerase or due to deamination of cytosine. The polypeptide is Uracil-DNA glycosylase (Clostridium botulinum (strain Alaska E43 / Type E3)).